The sequence spans 328 residues: tRNA uridine(34) hydroxylase (328 aa).

In terms of domain architecture, Rhodanese spans 123 to 217 (SDPDVLLVDT…YLEEVPQEES (95 aa)). The active-site Cysteine persulfide intermediate is Cys177.

The protein belongs to the TrhO family.

It catalyses the reaction uridine(34) in tRNA + AH2 + O2 = 5-hydroxyuridine(34) in tRNA + A + H2O. In terms of biological role, catalyzes oxygen-dependent 5-hydroxyuridine (ho5U) modification at position 34 in tRNAs. The protein is tRNA uridine(34) hydroxylase of Psychromonas ingrahamii (strain DSM 17664 / CCUG 51855 / 37).